A 180-amino-acid polypeptide reads, in one-letter code: D-lyxose ketol-isomerase (180 aa).

Lysine 62 contacts D-fructose. Mn(2+) is bound by residues histidine 75 and histidine 77. Residue lysine 86 participates in D-fructose binding. Mn(2+)-binding residues include glutamate 88 and histidine 143. 3 residues coordinate D-fructose: glutamate 156, aspartate 166, and arginine 175.

It belongs to the D-lyxose ketol-isomerase family. Homodimer; disulfide-linked. Stabilized by a disulfide bond between the two monomers of the dimeric enzyme and increased hydrophobicity at the dimer interface. Mn(2+) serves as cofactor.

It catalyses the reaction D-lyxose = D-xylulose. In terms of biological role, sugar isomerase that catalyzes the reversible isomerization of D-lyxose to D-xylulose. Is highly specific for the substrate D-lyxose, showing less than 2% activity towards mannose and other substrates reported for lyxose isomerases. The protein is D-lyxose ketol-isomerase of Thermofilum sp. (strain ex4484_79).